Consider the following 976-residue polypeptide: Villin-2 (976 aa).

Gelsolin-like repeat units follow at residues 27-77 (FEAV…DEAG), 148-188 (IRLK…QERA), 260-302 (GKME…DERK), 399-450 (GKVK…EDQD), 531-571 (NKAV…EQLE), and 633-674 (FQVE…KEKQ). Positions 769-917 (NSSSNRPAYS…SEIQPSGATF (149 aa)) are disordered. Over residues 782–794 (RLNESHDGPRQRA) the composition is skewed to basic and acidic residues. 3 stretches are compositionally biased toward low complexity: residues 795-812 (EALA…SSTK), 823-841 (SQAS…VLVA), and 848-858 (DTSPTRRSTSS). Residue S890 is modified to Phosphoserine. A compositionally biased stretch (polar residues) spans 908–917 (SEIQPSGATF). Positions 911-976 (QPSGATFTYE…DLLKKKFDLF (66 aa)) constitute an HP domain.

It belongs to the villin/gelsolin family. Expressed in all tissues examined. Mainly detected in the root epidermis and vasculature. Expressed in the root cap.

The protein localises to the cytoplasm. It localises to the cytoskeleton. In terms of biological role, ca(2+)-regulated actin-binding protein. Involved in actin filaments bundling. Caps the barbed end of actin filaments and is able to sever them in a calcium-dependent manner. Required for the construction of actin collars in pollen tubes. Acts redundantly with VLN5 (AC Q9LVC6) to generate thick actin filament bundles and to regulate polarized pollen tube growth. Acts redundantly with VLN3 (AC O81645) to regulate directional organ growth and in sclerenchyma development. The protein is Villin-2 of Arabidopsis thaliana (Mouse-ear cress).